Here is a 93-residue protein sequence, read N- to C-terminus: Putative membrane protein insertion efficiency factor (93 aa).

The disordered stretch occupies residues 72–93; that stretch reads VPEHFPSWRGPHPKTPSRKTPE. Residues 82 to 93 are compositionally biased toward basic residues; sequence PHPKTPSRKTPE.

This sequence belongs to the UPF0161 family.

It is found in the cell membrane. In terms of biological role, could be involved in insertion of integral membrane proteins into the membrane. The sequence is that of Putative membrane protein insertion efficiency factor from Deinococcus geothermalis (strain DSM 11300 / CIP 105573 / AG-3a).